The following is a 120-amino-acid chain: NAD(P)H-quinone oxidoreductase subunit 3, organellar chromatophore (120 aa).

Helical transmembrane passes span 6-26 (GYDAFLGFLLIATAVPVLALL), 64-84 (MFALVFVIFDVETVFLYPWAV), and 89-109 (LGLLAFIEALIFIAILVIALA).

This sequence belongs to the complex I subunit 3 family. As to quaternary structure, NDH is composed of at least 16 different subunits, 5 of which are encoded in the nucleus.

Its subcellular location is the plastid. It localises to the organellar chromatophore thylakoid membrane. The enzyme catalyses a plastoquinone + NADH + (n+1) H(+)(in) = a plastoquinol + NAD(+) + n H(+)(out). The catalysed reaction is a plastoquinone + NADPH + (n+1) H(+)(in) = a plastoquinol + NADP(+) + n H(+)(out). Functionally, NDH shuttles electrons from NAD(P)H:plastoquinone, via FMN and iron-sulfur (Fe-S) centers, to quinones in the photosynthetic chain and possibly in a chloroplast respiratory chain. The immediate electron acceptor for the enzyme in this species is believed to be plastoquinone. Couples the redox reaction to proton translocation, and thus conserves the redox energy in a proton gradient. The chain is NAD(P)H-quinone oxidoreductase subunit 3, organellar chromatophore from Paulinella chromatophora.